The sequence spans 188 residues: NADH-quinone oxidoreductase subunit I (188 aa).

4Fe-4S ferredoxin-type domains follow at residues 44 to 74 and 90 to 119; these read LNRY…VEGA and RVYQ…MTNE. Cysteine 54, cysteine 57, cysteine 60, cysteine 64, cysteine 99, cysteine 102, cysteine 105, and cysteine 109 together coordinate [4Fe-4S] cluster. The segment at 144 to 188 is disordered; the sequence is GMVDSPHPMAPGTTAEDYYRGTVTGGAAPASQDEPEADDTAGDRP. The span at 176–188 shows a compositional bias: acidic residues; it reads DEPEADDTAGDRP.

The protein belongs to the complex I 23 kDa subunit family. In terms of assembly, NDH-1 is composed of 14 different subunits. Subunits NuoA, H, J, K, L, M, N constitute the membrane sector of the complex. Requires [4Fe-4S] cluster as cofactor.

It is found in the cell membrane. The enzyme catalyses a quinone + NADH + 5 H(+)(in) = a quinol + NAD(+) + 4 H(+)(out). Functionally, NDH-1 shuttles electrons from NADH, via FMN and iron-sulfur (Fe-S) centers, to quinones in the respiratory chain. The immediate electron acceptor for the enzyme in this species is believed to be ubiquinone. Couples the redox reaction to proton translocation (for every two electrons transferred, four hydrogen ions are translocated across the cytoplasmic membrane), and thus conserves the redox energy in a proton gradient. The sequence is that of NADH-quinone oxidoreductase subunit I from Rhodococcus opacus (strain B4).